The primary structure comprises 321 residues: Probable pectate lyase A (321 aa).

The signal sequence occupies residues 1–20 (MANFKLFLALAACLSGQALA). Asparagine 93 carries an N-linked (GlcNAc...) asparagine glycan. Ca(2+) is bound by residues aspartate 134, aspartate 163, and aspartate 167. The active site involves arginine 220.

This sequence belongs to the polysaccharide lyase 1 family. It depends on Ca(2+) as a cofactor.

The protein localises to the secreted. The enzyme catalyses Eliminative cleavage of (1-&gt;4)-alpha-D-galacturonan to give oligosaccharides with 4-deoxy-alpha-D-galact-4-enuronosyl groups at their non-reducing ends.. In terms of biological role, pectinolytic enzyme consist of four classes of enzymes: pectin lyase, polygalacturonase, pectin methylesterase and rhamnogalacturonase. Among pectinolytic enzymes, pectin lyase is the most important in depolymerization of pectin, since it cleaves internal glycosidic bonds of highly methylated pectins. Favors pectate, the anion, over pectin, the methyl ester. The polypeptide is Probable pectate lyase A (plyA) (Aspergillus flavus (strain ATCC 200026 / FGSC A1120 / IAM 13836 / NRRL 3357 / JCM 12722 / SRRC 167)).